A 263-amino-acid chain; its full sequence is HTH-type transcriptional repressor NanR (263 aa).

A disordered region spans residues 1–22; the sequence is MGLMNAFDSQTEDSSPAIGRNL. The HTH gntR-type domain maps to 30–98; it reads KKLSEMVEEE…NGERARVSRP (69 aa). The H-T-H motif DNA-binding region spans 58 to 77; the sequence is ERELMAFFNVGRPSVREALA.

Belongs to the NanR family.

Its function is as follows. Transcriptional repressor that controls expression of the genes required for the catabolism of sialic acids. The protein is HTH-type transcriptional repressor NanR of Shigella sonnei (strain Ss046).